The following is a 299-amino-acid chain: CRISPR-associated endonuclease Cas1 3 (299 aa).

3 residues coordinate Mn(2+): glutamate 143, histidine 210, and aspartate 223.

It belongs to the CRISPR-associated endonuclease Cas1 family. Homodimer, forms a heterotetramer with a Cas2 homodimer. Requires Mg(2+) as cofactor. Mn(2+) serves as cofactor.

In terms of biological role, CRISPR (clustered regularly interspaced short palindromic repeat), is an adaptive immune system that provides protection against mobile genetic elements (viruses, transposable elements and conjugative plasmids). CRISPR clusters contain spacers, sequences complementary to antecedent mobile elements, and target invading nucleic acids. CRISPR clusters are transcribed and processed into CRISPR RNA (crRNA). Acts as a dsDNA endonuclease. Involved in the integration of spacer DNA into the CRISPR cassette. This chain is CRISPR-associated endonuclease Cas1 3, found in Methanospirillum hungatei JF-1 (strain ATCC 27890 / DSM 864 / NBRC 100397 / JF-1).